Consider the following 172-residue polypeptide: Adenine phosphoribosyltransferase (172 aa).

This sequence belongs to the purine/pyrimidine phosphoribosyltransferase family. In terms of assembly, homodimer.

It localises to the cytoplasm. It catalyses the reaction AMP + diphosphate = 5-phospho-alpha-D-ribose 1-diphosphate + adenine. Its pathway is purine metabolism; AMP biosynthesis via salvage pathway; AMP from adenine: step 1/1. Functionally, catalyzes a salvage reaction resulting in the formation of AMP, that is energically less costly than de novo synthesis. The chain is Adenine phosphoribosyltransferase from Roseiflexus sp. (strain RS-1).